An 876-amino-acid polypeptide reads, in one-letter code: Valine--tRNA ligase (876 aa).

The 'HIGH' region motif lies at 44 to 54 (PNVTGKLHLGH). Positions 520–524 (KMSKS) match the 'KMSKS' region motif. Lys523 is an ATP binding site. Positions 805–876 (LEGLIDMDKE…VKNRIEQLKA (72 aa)) form a coiled coil.

The protein belongs to the class-I aminoacyl-tRNA synthetase family. ValS type 1 subfamily. As to quaternary structure, monomer.

Its subcellular location is the cytoplasm. The catalysed reaction is tRNA(Val) + L-valine + ATP = L-valyl-tRNA(Val) + AMP + diphosphate. In terms of biological role, catalyzes the attachment of valine to tRNA(Val). As ValRS can inadvertently accommodate and process structurally similar amino acids such as threonine, to avoid such errors, it has a 'posttransfer' editing activity that hydrolyzes mischarged Thr-tRNA(Val) in a tRNA-dependent manner. The sequence is that of Valine--tRNA ligase from Staphylococcus haemolyticus (strain JCSC1435).